The primary structure comprises 271 residues: tRNA pseudouridine synthase A (271 aa).

The active-site Nucleophile is aspartate 51. Position 109 (tyrosine 109) interacts with substrate.

The protein belongs to the tRNA pseudouridine synthase TruA family. Homodimer.

The catalysed reaction is uridine(38/39/40) in tRNA = pseudouridine(38/39/40) in tRNA. Functionally, formation of pseudouridine at positions 38, 39 and 40 in the anticodon stem and loop of transfer RNAs. This is tRNA pseudouridine synthase A from Methylococcus capsulatus (strain ATCC 33009 / NCIMB 11132 / Bath).